Here is a 192-residue protein sequence, read N- to C-terminus: Elongation factor P (192 aa).

This sequence belongs to the elongation factor P family.

It is found in the cytoplasm. It participates in protein biosynthesis; polypeptide chain elongation. Involved in peptide bond synthesis. Stimulates efficient translation and peptide-bond synthesis on native or reconstituted 70S ribosomes in vitro. Probably functions indirectly by altering the affinity of the ribosome for aminoacyl-tRNA, thus increasing their reactivity as acceptors for peptidyl transferase. The chain is Elongation factor P from Borrelia turicatae (strain 91E135).